The following is a 148-amino-acid chain: Small ribosomal subunit protein eS6 (148 aa).

This sequence belongs to the eukaryotic ribosomal protein eS6 family.

The chain is Small ribosomal subunit protein eS6 from Pyrobaculum aerophilum (strain ATCC 51768 / DSM 7523 / JCM 9630 / CIP 104966 / NBRC 100827 / IM2).